The chain runs to 143 residues: Large ribosomal subunit protein uL11 (143 aa).

It belongs to the universal ribosomal protein uL11 family. Part of the ribosomal stalk of the 50S ribosomal subunit. Interacts with L10 and the large rRNA to form the base of the stalk. L10 forms an elongated spine to which L12 dimers bind in a sequential fashion forming a multimeric L10(L12)X complex. Post-translationally, one or more lysine residues are methylated.

Functionally, forms part of the ribosomal stalk which helps the ribosome interact with GTP-bound translation factors. The protein is Large ribosomal subunit protein uL11 of Sphingopyxis alaskensis (strain DSM 13593 / LMG 18877 / RB2256) (Sphingomonas alaskensis).